The sequence spans 276 residues: Glutamate 5-kinase (276 aa).

Lysine 14 serves as a coordination point for ATP. Serine 54, aspartate 141, and asparagine 157 together coordinate substrate. Residues 177 to 178 (SD) and 219 to 225 (TGGMLTK) each bind ATP.

Belongs to the glutamate 5-kinase family.

It localises to the cytoplasm. It carries out the reaction L-glutamate + ATP = L-glutamyl 5-phosphate + ADP. Its pathway is amino-acid biosynthesis; L-proline biosynthesis; L-glutamate 5-semialdehyde from L-glutamate: step 1/2. Its function is as follows. Catalyzes the transfer of a phosphate group to glutamate to form L-glutamate 5-phosphate. This is Glutamate 5-kinase from Listeria innocua serovar 6a (strain ATCC BAA-680 / CLIP 11262).